We begin with the raw amino-acid sequence, 368 residues long: P2X receptor C (368 aa).

The Cytoplasmic segment spans residues 1–24 (MLDWDSILAYNTIKVVRIRDRRLG). A helical membrane pass occupies residues 25–45 (ILHLIFMIAIISYVVIYSAII). Residues 46–368 (KKGYLSIEEP…DKLYHNIEAL (323 aa)) lie on the Lumenal side of the membrane. The interval 282–295 (RHAIRLIFIQTGVI) is pore-forming motif.

This sequence belongs to the P2X receptor family.

The protein resides in the contractile vacuole membrane. Its function is as follows. P2X receptors are ligand-gated ion channels that play a role in intracellular calcium signaling. ATP does not evoke inward currents in p2xC. Not essential for osmoregulation. The chain is P2X receptor C (p2xC) from Dictyostelium discoideum (Social amoeba).